The sequence spans 429 residues: Cholesterol 7-desaturase nvd (429 aa).

A helical transmembrane segment spans residues phenylalanine 23–valine 43. The Rieske domain maps to tyrosine 98 to isoleucine 201. 4 residues coordinate [2Fe-2S] cluster: cysteine 138, histidine 140, cysteine 158, and histidine 161.

It belongs to the cholesterol 7-desaturase family. [2Fe-2S] cluster is required as a cofactor. In terms of tissue distribution, expressed predominantly in the prothoracic gland and weakly in brain and malpighian tubules.

The protein resides in the membrane. It carries out the reaction cholesterol + NADPH + O2 + H(+) = 7-dehydrocholesterol + NADP(+) + 2 H2O. The catalysed reaction is cholesterol + NADH + O2 + H(+) = 7-dehydrocholesterol + NAD(+) + 2 H2O. Its pathway is steroid hormone biosynthesis; dafachronic acid biosynthesis. Catalyzes the production of 7-dehydrocholesterol (7-DHC or cholesta-5,7-dien-3beta-ol) by inserting a double bond (desaturating) at the C7-C8 single bond of cholesterol. Essential regulator of steroid biosynthesis, as this reaction is the first step in the synthesis of the steroid hormone Delta(7)-dafachronic acid. Required for insect molting, metamorphosis and body growth throughout development via the regulation of ecdysteroid biosynthesis in the prothoracic gland. The sequence is that of Cholesterol 7-desaturase nvd from Drosophila melanogaster (Fruit fly).